A 758-amino-acid polypeptide reads, in one-letter code: 5-methyltetrahydropteroyltriglutamate--homocysteine methyltransferase (758 aa).

Residues 16–19 (RELK) and Lys112 contribute to the 5-methyltetrahydropteroyltri-L-glutamate site. L-homocysteine-binding positions include 433-435 (IGS) and Glu486. L-methionine contacts are provided by residues 433–435 (IGS) and Glu486. 5-methyltetrahydropteroyltri-L-glutamate contacts are provided by residues 517–518 (RC) and Trp563. Position 601 (Asp601) interacts with L-homocysteine. An L-methionine-binding site is contributed by Asp601. Residue Glu607 coordinates 5-methyltetrahydropteroyltri-L-glutamate. His643, Cys645, and Glu667 together coordinate Zn(2+). His696 (proton donor) is an active-site residue. Residue Cys728 coordinates Zn(2+).

Belongs to the vitamin-B12 independent methionine synthase family. Zn(2+) serves as cofactor.

It catalyses the reaction 5-methyltetrahydropteroyltri-L-glutamate + L-homocysteine = tetrahydropteroyltri-L-glutamate + L-methionine. Its pathway is amino-acid biosynthesis; L-methionine biosynthesis via de novo pathway; L-methionine from L-homocysteine (MetE route): step 1/1. Functionally, catalyzes the transfer of a methyl group from 5-methyltetrahydrofolate to homocysteine resulting in methionine formation. The sequence is that of 5-methyltetrahydropteroyltriglutamate--homocysteine methyltransferase from Neisseria gonorrhoeae (strain ATCC 700825 / FA 1090).